The following is a 188-amino-acid chain: Probable RNA 2'-phosphotransferase (188 aa).

This sequence belongs to the KptA/TPT1 family.

Removes the 2'-phosphate from RNA via an intermediate in which the phosphate is ADP-ribosylated by NAD followed by a presumed transesterification to release the RNA and generate ADP-ribose 1''-2''-cyclic phosphate (APPR&gt;P). May function as an ADP-ribosylase. This is Probable RNA 2'-phosphotransferase from Pseudomonas savastanoi pv. phaseolicola (strain 1448A / Race 6) (Pseudomonas syringae pv. phaseolicola (strain 1448A / Race 6)).